The sequence spans 71 residues: MAGENDLNDRVEALEVRLAYQDETIEALNQTVTAQWKQIDALTRQLAALSERLDQAESSAGAPANERPPHY.

The interval 52-71 (RLDQAESSAGAPANERPPHY) is disordered.

This sequence belongs to the SlyX family.

This chain is Protein SlyX homolog, found in Rhodopseudomonas palustris (strain ATCC BAA-98 / CGA009).